A 559-amino-acid polypeptide reads, in one-letter code: Glucose-6-phosphate isomerase (559 aa).

Residue E352 is the Proton donor of the active site. Residues H383 and K511 contribute to the active site.

It belongs to the GPI family.

Its subcellular location is the cytoplasm. The enzyme catalyses alpha-D-glucose 6-phosphate = beta-D-fructose 6-phosphate. It participates in carbohydrate biosynthesis; gluconeogenesis. It functions in the pathway carbohydrate degradation; glycolysis; D-glyceraldehyde 3-phosphate and glycerone phosphate from D-glucose: step 2/4. Functionally, catalyzes the reversible isomerization of glucose-6-phosphate to fructose-6-phosphate. This chain is Glucose-6-phosphate isomerase, found in Chlorobium phaeobacteroides (strain DSM 266 / SMG 266 / 2430).